The primary structure comprises 72 residues: Translation initiation factor IF-1 (72 aa).

Residues 1–72 enclose the S1-like domain; sequence MPKEEVLEFP…TKGRITYRFK (72 aa).

Belongs to the IF-1 family. Component of the 30S ribosomal translation pre-initiation complex which assembles on the 30S ribosome in the order IF-2 and IF-3, IF-1 and N-formylmethionyl-tRNA(fMet); mRNA recruitment can occur at any time during PIC assembly.

It is found in the cytoplasm. Its function is as follows. One of the essential components for the initiation of protein synthesis. Stabilizes the binding of IF-2 and IF-3 on the 30S subunit to which N-formylmethionyl-tRNA(fMet) subsequently binds. Helps modulate mRNA selection, yielding the 30S pre-initiation complex (PIC). Upon addition of the 50S ribosomal subunit IF-1, IF-2 and IF-3 are released leaving the mature 70S translation initiation complex. The polypeptide is Translation initiation factor IF-1 (Chelativorans sp. (strain BNC1)).